The chain runs to 109 residues: Parvalbumin beta (109 aa).

Ala-2 bears the N-acetylalanine mark. 2 consecutive EF-hand domains span residues 39 to 74 (KSAD…FKAG) and 78 to 109 (LSDA…MIKG). Positions 52, 54, 56, 58, 60, 63, 91, 93, 95, 97, and 102 each coordinate Ca(2+).

Belongs to the parvalbumin family. In terms of processing, the N-terminus is blocked.

In muscle, parvalbumin is thought to be involved in relaxation after contraction. It binds two calcium ions. The protein is Parvalbumin beta of Scomber scombrus (Atlantic mackerel).